The chain runs to 293 residues: Putative ABC transporter ATP-binding protein AF_0731 (293 aa).

Residues I2–L236 enclose the ABC transporter domain. Position 34-41 (G34–T41) interacts with ATP.

The protein belongs to the ABC transporter superfamily.

The protein resides in the cell membrane. Probably part of an ABC transporter complex. Responsible for energy coupling to the transport system. This is Putative ABC transporter ATP-binding protein AF_0731 from Archaeoglobus fulgidus (strain ATCC 49558 / DSM 4304 / JCM 9628 / NBRC 100126 / VC-16).